The primary structure comprises 1828 residues: InaD-like protein (1828 aa).

In terms of domain architecture, L27 spans 5 to 65 (PAPDKLQVLQ…SIKQLKGQLS (61 aa)). 3 consecutive PDZ domains span residues 134–221 (YIDI…AREP), 248–328 (DVEL…ARDP), and 365–453 (GVEL…VRRK). A phosphoserine mark is found at Ser-459 and Ser-522. The PDZ 4 domain maps to 553–639 (DAELQKYSKL…PFTLVCCRRL (87 aa)). Ser-645 is modified (phosphoserine). 2 consecutive PDZ domains span residues 686-758 (IVEL…EVLK) and 1070-1162 (IVEI…QSLS). The tract at residues 1168–1220 (IPSVHNKANKIANNQDQNTEEKKEKRQGTPPPPMKLPPPYKAPSDDSDENEEE) is disordered. A compositionally biased stretch (pro residues) spans 1196–1208 (TPPPPMKLPPPYK). Ser-1211 bears the Phosphoserine mark. Positions 1241–1324 (IIELEKDKNG…KVKLVFIRNE (84 aa)) constitute a PDZ 7 domain. Residues 1333 to 1362 (APFPVPSSSPSSLEDQSGTEPVSSEEDGSL) form a disordered region. Polar residues predominate over residues 1345–1354 (LEDQSGTEPV). PDZ domains lie at 1464–1547 (IIEI…YRDE) and 1560–1642 (PVDL…GRLR). Thr-1535 bears the Phosphothreonine mark. The span at 1645–1668 (SWTSSRKTSQNSQGSQHSTHSSFH) shows a compositional bias: polar residues. The tract at residues 1645–1669 (SWTSSRKTSQNSQGSQHSTHSSFHP) is disordered. Residues 1703–1789 (TVEIIRELSD…RIILQVVADT (87 aa)) form the PDZ 10 domain. The disordered stretch occupies residues 1805 to 1828 (YHLGSPTAEHHPEDTEEPLQMTAG).

As to quaternary structure, forms a ternary complex with PALS1 and CRB1. Component of a complex whose core is composed of ARHGAP17, AMOT, PALS1, INADL/PATJ and PARD3/PAR3. Forms a heterotrimeric complex composed of MMP5, LIN7B and PATJ; the N-terminal L27 domain of PALS1 interacts with the L27 domain of PATJ and the C-terminal L27 domain of PALS1 interacts with the L27 domain of LIN7B. Component of a complex composed of CRB3, PALS1 and PATJ. As part of the Crumbs complex; interacts with WWP1, the interaction is enhanced by AMOTL2 and facilitates WWP1 localization to the plasma membrane. The Crumbs complex promotes monoubiquitination of AMOTL2 by WWP1, which activates the Hippo signaling pathway. Interacts (via N-terminus) with PALS1/PALS (via PDZ domain). Interacts with TJP3/ZO-3 and CLDN1/claudin-1. Interacts with ASIC3, KCNJ10, KCNJ15, GRIN2A, GRIN2B, GRIN2C, GRIN2D, NLGN2, and HTR2A. Interacts with MPP7. Directly interacts with HTR4. Interacts (via PDZ domain 8) with WWC1 (via the ADDV motif). Interacts with SLC6A4. Interacts (via C-terminus) with ARHGEF18. Interacts with NPHP1. Interacts with PARD3/PAR3. Interacts (via PDZ1-6 domains) with TJP1/ZO1; the interaction is required for attachment and extension of TJP1/ZO1 condensates along the apical cell interface.

The protein localises to the cell junction. Its subcellular location is the tight junction. The protein resides in the apical cell membrane. It localises to the cytoplasm. It is found in the perinuclear region. Its function is as follows. Scaffolding protein that facilitates the localization of proteins to the cell membrane. Required for the correct formation of tight junctions and epithelial apico-basal polarity. Acts (via its L27 domain) as an apical connector and elongation factor for multistranded TJP1/ZO1 condensates that form a tight junction belt, thereby required for the formation of the tight junction-mediated cell barrier. Positively regulates epithelial cell microtubule elongation and cell migration, possibly via facilitating localization of PRKCI/aPKC and PAR3D/PAR3 at the leading edge of migrating cells. Plays a role in the correct reorientation of the microtubule-organizing center during epithelial migration. May regulate the surface expression and/or function of ASIC3 in sensory neurons. May recruit ARHGEF18 to apical cell-cell boundaries. In Canis lupus familiaris (Dog), this protein is InaD-like protein.